The chain runs to 500 residues: Cysteine-rich secretory protein LCCL domain-containing 1 (500 aa).

Residues 1–23 (MKCTAREWLRVTTVLFMARAIPA) form the signal peptide. The SCP domain maps to 66–206 (LDLHNKLRSQ…PKAVYLVCNY (141 aa)). Over residues 254 to 280 (EETNEIERQQSQVHDTHVRTRSDDSSR) the composition is skewed to basic and acidic residues. The disordered stretch occupies residues 254 to 281 (EETNEIERQQSQVHDTHVRTRSDDSSRN). LCCL domains are found at residues 289 to 384 (MSQI…ANSF) and 390 to 492 (TVQA…PGGK). 4 cysteine pairs are disulfide-bonded: Cys295-Cys313, Cys317-Cys337, Cys396-Cys418, and Cys422-Cys445.

Belongs to the CRISP family.

Its subcellular location is the secreted. This is Cysteine-rich secretory protein LCCL domain-containing 1 (CRISPLD1) from Homo sapiens (Human).